A 308-amino-acid chain; its full sequence is 4-hydroxy-tetrahydrodipicolinate synthase (308 aa).

T53 provides a ligand contact to pyruvate. The active-site Proton donor/acceptor is the Y141. K169 serves as the catalytic Schiff-base intermediate with substrate. V209 provides a ligand contact to pyruvate.

It belongs to the DapA family. In terms of assembly, homotetramer; dimer of dimers.

It localises to the cytoplasm. It carries out the reaction L-aspartate 4-semialdehyde + pyruvate = (2S,4S)-4-hydroxy-2,3,4,5-tetrahydrodipicolinate + H2O + H(+). Its pathway is amino-acid biosynthesis; L-lysine biosynthesis via DAP pathway; (S)-tetrahydrodipicolinate from L-aspartate: step 3/4. Its function is as follows. Catalyzes the condensation of (S)-aspartate-beta-semialdehyde [(S)-ASA] and pyruvate to 4-hydroxy-tetrahydrodipicolinate (HTPA). This is 4-hydroxy-tetrahydrodipicolinate synthase from Acidothermus cellulolyticus (strain ATCC 43068 / DSM 8971 / 11B).